We begin with the raw amino-acid sequence, 215 residues long: Myelin protein zero-like protein 2 (215 aa).

An N-terminal signal peptide occupies residues 1–26; sequence MYGKSSTRAVLLLLGIQLTALWPIAA. The region spanning 27–141 is the Ig-like V-type domain; it reads VEIYTSRVLE…DGVIGEIRLS (115 aa). At 27–154 the chain is on the extracellular side; sequence VEIYTSRVLE…TVRFSEIHFL (128 aa). N-linked (GlcNAc...) asparagine glycans are attached at residues N39 and N118. C47 and C123 are oxidised to a cystine. The helical transmembrane segment at 155-175 threads the bilayer; that stretch reads ALAIGSACALMIIIVIVVVLF. The Cytoplasmic segment spans residues 176 to 215; it reads QHYRKKRWAERAHKVVEIKSKEEERLNQEKKVSVYLEDTD.

It belongs to the myelin P0 protein family. As to expression, widely expressed. In fetal tissues, highest expression in the inner ear. In adult tissues, highest levels in thymus and lung.

It localises to the membrane. Mediates homophilic cell-cell adhesion. This is Myelin protein zero-like protein 2 (MPZL2) from Homo sapiens (Human).